Reading from the N-terminus, the 113-residue chain is UPF0102 protein Shal_4069 (113 aa).

Belongs to the UPF0102 family.

The chain is UPF0102 protein Shal_4069 from Shewanella halifaxensis (strain HAW-EB4).